Here is a 777-residue protein sequence, read N- to C-terminus: Hepatocyte growth factor-regulated tyrosine kinase substrate (777 aa).

The region spanning 15-143 (ATSQLLLETD…IMKVEGHVFP (129 aa)) is the VHS domain. The FYVE-type zinc-finger motif lies at 160-220 (WVDAEECHRC…VCEPCFEQLN (61 aa)). Positions 166, 169, 182, 185, 190, and 193 each coordinate Zn(2+). Lys207 is modified (N6-acetyllysine). 2 residues coordinate Zn(2+): Cys212 and Cys215. The segment at 223 to 319 (AEGKAASTTE…SPVNSSAPLA (97 aa)) is disordered. The interval 225–541 (GKAASTTELP…QRLQEQEKER (317 aa)) is interaction with SNX1. Residues 258-277 (QEEEELQLALALSQSEAEEK) enclose the UIM domain. Residues 292–311 (AEPTPVASSAPPASSLYSSP) show a composition bias toward low complexity. Phosphotyrosine is present on residues Tyr308, Tyr329, and Tyr334. Residues 338–370 (KQEEARKSPTPSAPVPLTEPTAQPGEGHAIPAN) are disordered. Residues 443–541 (SINTMHPQLL…QRLQEQEKER (99 aa)) are interaction with SNAP25 and TRAK2. An interaction with STAM region spans residues 452-570 (LELLNQLDER…FSLPYAQLQA (119 aa)). The tract at residues 478-777 (ARGALSALRE…GSEAQLISFD (300 aa)) is interaction with NF2. Lys549 carries the post-translational modification N6-succinyllysine. Positions 645–658 (AAAQGPAGPTTSPA) are enriched in low complexity. Disordered regions lie at residues 645–698 (AAAQ…YMGS) and 712–777 (NLMP…ISFD). Polar residues-rich tracts occupy residues 659–698 (YSSYQPTPTQGYQTVASQAPQSLPAISQPPQSGTMGYMGS) and 730–739 (PYISGQQPVY). A compositionally biased stretch (low complexity) spans 753-777 (PPVAQQPPAQGPPAQGSEAQLISFD).

In terms of assembly, component of the ESCRT-0 complex composed of STAM or STAM2 and HGS. Part of a complex at least composed of HSG, STAM2 (or probably STAM) and EPS15. Interacts with STAM. Interacts with STAM2. Interacts with EPS15; the interaction is direct, calcium-dependent and inhibited by SNAP25. Identified in a complex with STAM and LITAF. Found in a complex with STAM and E3 ligase ITCH and DTX3L. Interacts with E3 ligase DTX3L; the interaction brings together STAM and HSG, promotes their recruitment to early endosomes and decreases STAM and HGS ubiquitination by ITCH. Interacts with NF2; the interaction is direct. Interacts with ubiquitin; the interaction is direct. Interacts with VPS37C. Interacts with SMAD1, SMAD2 and SMAD3. Interacts with TSG101; the interaction mediates the association with the ESCRT-I complex. Interacts with SNAP25; the interaction is direct and decreases with addition of increasing concentrations of free calcium. Interacts with SNX1; the interaction is direct. Component of a 550 kDa membrane complex at least composed of HGS and SNX1 but excluding EGFR. Interacts with TRAK1. Interacts with TRAK2. Component of the CART complex, at least composed of ACTN4, HGS/HRS, MYO5B and TRIM3. Interacts (via UIM domain) with UBQLN1 (via ubiquitin-like domain). Interacts with ARRDC3. Identified in a complex containing at least ARRDC4, AVPR2 and HGS. Interacts with LAPTM4B; promotes HGS ubiquitination. Post-translationally, phosphorylated on Tyr-334. A minor site of phosphorylation on Tyr-329 is detected. Phosphorylation occurs in response to EGF, IL-2, GM-CSF and HGF. In terms of processing, ubiquitinated by ITCH.

It is found in the cytoplasm. The protein localises to the early endosome membrane. It localises to the endosome. Its subcellular location is the multivesicular body membrane. Involved in intracellular signal transduction mediated by cytokines and growth factors. When associated with STAM it suppresses DNA signaling upon stimulation by IL-2 and GM-CSF. Could be a direct effector of PI3-kinase in vesicular pathway via early endosomes and may regulate trafficking to early and late endosomes by recruiting clathrin. May concentrate ubiquitinated receptors within clathrin-coated regions. Involved in down-regulation of receptor tyrosine kinase via multivesicular body (MVBs) when complexed with STAM (ESCRT-0 complex). The ESCRT-0 complex binds ubiquitin and acts as a sorting machinery that recognizes ubiquitinated receptors and transfers them to further sequential lysosomal sorting/trafficking processes. May contribute to the efficient recruitment of SMADs to the activin receptor complex. Involved in receptor recycling via its association with the CART complex, a multiprotein complex required for efficient transferrin receptor recycling but not for EGFR degradation. This Bos taurus (Bovine) protein is Hepatocyte growth factor-regulated tyrosine kinase substrate (HGS).